The primary structure comprises 207 residues: Probable GTP-binding protein EngB (207 aa).

Positions 22-194 (DLPEIAFAGR…WRRIEEVLPA (173 aa)) constitute an EngB-type G domain. Residues 30 to 37 (GRSNVGKS), 57 to 61 (GRTQL), 75 to 78 (DLPG), 142 to 145 (TKCD), and 173 to 175 (FSA) each bind GTP. Mg(2+)-binding residues include S37 and T59.

Belongs to the TRAFAC class TrmE-Era-EngA-EngB-Septin-like GTPase superfamily. EngB GTPase family. It depends on Mg(2+) as a cofactor.

Necessary for normal cell division and for the maintenance of normal septation. The chain is Probable GTP-binding protein EngB from Geotalea daltonii (strain DSM 22248 / JCM 15807 / FRC-32) (Geobacter daltonii).